The following is a 246-amino-acid chain: Envelope glycoprotein gp95 (246 aa).

The Extracellular segment spans residues 1 to 192 (IPSRPVGGPC…EWAVHLLKGL (192 aa)). N31 is a glycosylation site (N-linked (GlcNAc...) asparagine; by host). C50 and C86 are oxidised to a cystine. Residues 58–78 (GPTARIFASILAPGVAAAQAL) form a fusion peptide region. Residues 75–125 (AQALKEIERLACWSVKQANLTTSLLGDLLDDVTSIRHAVLQNRAAIDFLLL) adopt a coiled-coil conformation. N93 carries an N-linked (GlcNAc...) asparagine; by host glycan. Residues 114–130 (LQNRAAIDFLLLAHGHG) are immunosuppression. C131 and C138 are oxidised to a cystine. N-linked (GlcNAc...) asparagine; by host glycosylation occurs at N141. A coiled-coil region spans residues 143–173 (SDHSESIQKKFQLMKEHVNKIGVDSDPIGSW). The chain crosses the membrane as a helical span at residues 193 to 213 (LLGLVVILLLVVCLPCLLQIV). 2 S-palmitoyl cysteine; by host lipidation sites follow: C205 and C208. Residues 214 to 246 (CGNIRKMINNSISYHTEYKKLQKAYGQPESRIV) lie on the Cytoplasmic side of the membrane.

It belongs to the Alpharetroviruses envelope glycoprotein family. As to quaternary structure, heterodimer with the transmembrane protein. The mature envelope protein (Env) consists of a trimer of SU-TM heterodimers attached by a labile interchain disulfide bond. In terms of assembly, heterodimer with the surface protein. The mature envelope protein (Env) consists of a trimer of SU-TM heterodimers attached by a labile interchain disulfide bond. Post-translationally, specific enzymatic cleavages in vivo yield mature proteins. Envelope glycoproteins are synthesized as an inactive precursor that is N-glycosylated and processed likely by host cell furin or by a furin-like protease in the Golgi to yield the mature SU and TM proteins. The cleavage site between SU and TM requires the minimal sequence [KR]-X-[KR]-R. The transmembrane protein is palmitoylated. Palmitoylation is necessary for glycoprotein function and infectivity.

The protein localises to the virion membrane. It is found in the host cell membrane. Functionally, the surface protein (SU) attaches the virus to the host cell by binding to its receptor. This interaction triggers the refolding of the transmembrane protein (TM) thereby unmasking its fusion peptide and the formation of a reactive thiolate to activate its fusogenic potential. Fusion occurs at the host cell plasma membrane. Its function is as follows. The transmembrane protein (TM) acts as a class I viral fusion protein. Under the current model, the protein has at least 3 conformational states: pre-fusion native state, pre-hairpin intermediate state, and post-fusion hairpin state. During viral and target cell membrane fusion, the coiled coil regions (heptad repeats) assume a trimer-of-hairpins structure, positioning the fusion peptide in close proximity to the C-terminal region of the ectodomain. The formation of this structure appears to drive apposition and subsequent fusion of viral and target cell membranes. Membranes fusion leads to delivery of the nucleocapsid into the cytoplasm. In Galliformes, this protein is Envelope glycoprotein gp95 (env).